A 197-amino-acid chain; its full sequence is COMM domain-containing protein 6 (197 aa).

Residues 130–197 (ELVDFQWKIG…KEMSSVLETV (68 aa)) enclose the COMM domain.

Belongs to the COMM domain-containing protein 6 family. Component of the commander complex consisting of the CCC subcomplex and the retriever subcomplex. Component of the CCC subcomplex.

It is found in the nucleus. It localises to the cytoplasm. In terms of biological role, scaffold protein in the commander complex that is essential for endosomal recycling of transmembrane cargos; the commander complex is composed of the CCC subcomplex and the retriever subcomplex. May modulate activity of cullin-RING E3 ubiquitin ligase (CRL) complexes. Down-regulates activation of NF-kappa-B. Inhibits TNF-induced NFKB1 activation. The chain is COMM domain-containing protein 6 (commd6) from Xenopus tropicalis (Western clawed frog).